The sequence spans 127 residues: Peroxiredoxin-2 (127 aa).

The Thioredoxin domain maps to 1–125; it reads LFFYPLDFTF…ALRLVQGXQY (125 aa). The active-site Cysteine sulfenic acid (-SOH) intermediate is the Cys12. Phosphoserine is present on Ser73.

This sequence belongs to the peroxiredoxin family. AhpC/Prx1 subfamily. In terms of assembly, homodimer; disulfide-linked, upon oxidation. 5 homodimers assemble to form a ring-like decamer. Interacts with TIPIN. The enzyme can be inactivated by further oxidation of the cysteine sulfenic acid (C(P)-SOH) to sulphinic acid (C(P)-SO2H) instead of its condensation to a disulfide bond. It can be reactivated by forming a transient disulfide bond with sulfiredoxin SRXN1, which reduces the cysteine sulfinic acid in an ATP- and Mg-dependent manner. Post-translationally, acetylation increases resistance to transition to high molecular-mass complexes. Deacetylated by HDAC6 which decreases reducing activity.

The protein localises to the cytoplasm. It carries out the reaction a hydroperoxide + [thioredoxin]-dithiol = an alcohol + [thioredoxin]-disulfide + H2O. Functionally, thiol-specific peroxidase that catalyzes the reduction of hydrogen peroxide and organic hydroperoxides to water and alcohols, respectively. Plays a role in cell protection against oxidative stress by detoxifying peroxides and as sensor of hydrogen peroxide-mediated signaling events. Might participate in the signaling cascades of growth factors and tumor necrosis factor-alpha by regulating the intracellular concentrations of H(2)O(2). The protein is Peroxiredoxin-2 (PRDX2) of Sus scrofa (Pig).